A 309-amino-acid polypeptide reads, in one-letter code: UDP-N-acetylenolpyruvoylglucosamine reductase (309 aa).

The 188-residue stretch at 34 to 221 (RVGGPAQVLF…TAAREAAQPI (188 aa)) folds into the FAD-binding PCMH-type domain. Residue Arg179 is part of the active site. Ser228 acts as the Proton donor in catalysis. Residue Glu298 is part of the active site.

The protein belongs to the MurB family. FAD serves as cofactor.

It localises to the cytoplasm. The enzyme catalyses UDP-N-acetyl-alpha-D-muramate + NADP(+) = UDP-N-acetyl-3-O-(1-carboxyvinyl)-alpha-D-glucosamine + NADPH + H(+). The protein operates within cell wall biogenesis; peptidoglycan biosynthesis. Its function is as follows. Cell wall formation. The chain is UDP-N-acetylenolpyruvoylglucosamine reductase from Methylorubrum populi (strain ATCC BAA-705 / NCIMB 13946 / BJ001) (Methylobacterium populi).